The chain runs to 113 residues: Putative membrane protein insertion efficiency factor (113 aa).

The protein belongs to the UPF0161 family.

It localises to the cell inner membrane. Its function is as follows. Could be involved in insertion of integral membrane proteins into the membrane. The polypeptide is Putative membrane protein insertion efficiency factor (Campylobacter jejuni subsp. doylei (strain ATCC BAA-1458 / RM4099 / 269.97)).